The chain runs to 292 residues: Zinc finger protein OZF (292 aa).

C2H2-type zinc fingers lie at residues 16-38 (FACK…EHFH), 44-66 (FECN…QNTH), 72-94 (FECN…QKIH), 100-122 (FECK…QRTH), 128-150 (FVCK…EKIH), 156-178 (FKCS…QNIH), 184-206 (YECN…VRIH), 212-234 (YECN…VRSH), 240-262 (YGCN…LRIH), and 268-290 (YQCS…QKIH). Residues lysine 28, lysine 51, and lysine 56 each participate in a glycyl lysine isopeptide (Lys-Gly) (interchain with G-Cter in SUMO2) cross-link. Glycyl lysine isopeptide (Lys-Gly) (interchain with G-Cter in SUMO) cross-links involve residues lysine 157 and lysine 169. Lysine 173 participates in a covalent cross-link: Glycyl lysine isopeptide (Lys-Gly) (interchain with G-Cter in SUMO2). Residues 212–292 (YECNVCGKAF…HIRHQKIHTH (81 aa)) form an interaction with TERF2IP region.

Belongs to the krueppel C2H2-type zinc-finger protein family. Binds DNA. Interacts with SUMO conjugating enzyme UBC9/UBE2I. Interacts with the telomeric protein TERF2IP. In terms of processing, sumoylated. As to expression, liver, skeletal and heart muscle, mammary cells. Very low levels in brain, lung, placenta and kidney. Strongly overexpressed in many pancreas and colorectal cancers. Increased gene copy numbers are detected in 3 of 12 tumor cell lines and 2 of 12 primary pancreatic carcinomas. Overexpressed in 80% of colorectal cancers.

The protein resides in the nucleus. The protein is Zinc finger protein OZF (ZNF146) of Homo sapiens (Human).